Reading from the N-terminus, the 392-residue chain is Dual-specificity RNA methyltransferase RlmN (392 aa).

The active-site Proton acceptor is E115. Residues 121 to 358 form the Radical SAM core domain; the sequence is EVDRGTLCIS…YKAGYASPIR (238 aa). C128 and C369 form a disulfide bridge. [4Fe-4S] cluster-binding residues include C135, C139, and C142. Residues 195–196, S227, 249–251, and N326 each bind S-adenosyl-L-methionine; these read GE and SFH. The active-site S-methylcysteine intermediate is the C369.

Belongs to the radical SAM superfamily. RlmN family. [4Fe-4S] cluster is required as a cofactor.

The protein localises to the cytoplasm. The catalysed reaction is adenosine(2503) in 23S rRNA + 2 reduced [2Fe-2S]-[ferredoxin] + 2 S-adenosyl-L-methionine = 2-methyladenosine(2503) in 23S rRNA + 5'-deoxyadenosine + L-methionine + 2 oxidized [2Fe-2S]-[ferredoxin] + S-adenosyl-L-homocysteine. It catalyses the reaction adenosine(37) in tRNA + 2 reduced [2Fe-2S]-[ferredoxin] + 2 S-adenosyl-L-methionine = 2-methyladenosine(37) in tRNA + 5'-deoxyadenosine + L-methionine + 2 oxidized [2Fe-2S]-[ferredoxin] + S-adenosyl-L-homocysteine. Functionally, specifically methylates position 2 of adenine 2503 in 23S rRNA and position 2 of adenine 37 in tRNAs. m2A2503 modification seems to play a crucial role in the proofreading step occurring at the peptidyl transferase center and thus would serve to optimize ribosomal fidelity. The chain is Dual-specificity RNA methyltransferase RlmN from Jannaschia sp. (strain CCS1).